The sequence spans 465 residues: Neuromedin-K receptor (465 aa).

The Extracellular segment spans residues 1-84; it reads MATLPAAETW…TNQFVQPSWR (84 aa). N-linked (GlcNAc...) asparagine glycans are attached at residues Asn23, Asn50, and Asn73. A helical transmembrane segment spans residues 85-107; sequence IALWSLAYGVVVAVAVLGNLIVI. The Cytoplasmic portion of the chain corresponds to 108-117; it reads WIILAHKRMR. A helical transmembrane segment spans residues 118–139; the sequence is TVTNYFLVNLAFSDASMAAFNT. Residues 140–159 are Extracellular-facing; the sequence is LVNFIYALHSEWYFGANYCR. Cys158 and Cys233 are joined by a disulfide. A helical transmembrane segment spans residues 160 to 181; sequence FQNFFPITAVFASIYSMTAIAV. Residues 182–201 lie on the Cytoplasmic side of the membrane; that stretch reads DRYMAIIDPLKPRLSATATK. A helical membrane pass occupies residues 202 to 222; sequence IVIGSIWILAFLLAFPQCLYS. The Extracellular segment spans residues 223 to 245; the sequence is KTKVMPGRTLCFVQWPEGPKQHF. A helical transmembrane segment spans residues 246–270; that stretch reads TYHIIVIILVYCFPLLIMGITYTIV. Over 271–299 the chain is Cytoplasmic; that stretch reads GITLWGGEIPGDTCDKYHEQLKAKRKVVK. Residues 300 to 321 form a helical membrane-spanning segment; it reads MMIIVVMTFAICWLPYHIYFIL. Topologically, residues 322 to 334 are extracellular; it reads TAIYQQLNRWKYI. Residues 335–359 traverse the membrane as a helical segment; the sequence is QQVYLASFWLAMSSTMYNPIIYCCL. The Cytoplasmic portion of the chain corresponds to 360–465; that stretch reads NKRFRAGFKR…SPYTSVDEYS (106 aa). Cys374 carries the S-palmitoyl cysteine lipid modification. The disordered stretch occupies residues 415-465; that stretch reads PNDADTTRSSRKKRATPRDPSFNGCSRRNSKSASATSSFISSPYTSVDEYS. Positions 445–465 are enriched in low complexity; that stretch reads KSASATSSFISSPYTSVDEYS.

This sequence belongs to the G-protein coupled receptor 1 family. In terms of processing, the anchoring of this receptor to the plasma membrane is probably mediated by the palmitoylation of a cysteine residue.

It localises to the cell membrane. Its function is as follows. This is a receptor for the tachykinin neuropeptide neuromedin-K (neurokinin B). It is associated with G proteins that activate a phosphatidylinositol-calcium second messenger system. The rank order of affinity of this receptor to tachykinins is: neuromedin-K &gt; substance K &gt; substance P. This Homo sapiens (Human) protein is Neuromedin-K receptor (TACR3).